Here is a 157-residue protein sequence, read N- to C-terminus: Glycine-rich RNA-binding protein (157 aa).

In terms of domain architecture, RRM spans 6–84 (YRCFVGGLAW…RNITVNEAQS (79 aa)). The interval 70–157 (QELDGRNITV…YGGGGGGSRW (88 aa)) is disordered. 2 stretches are compositionally biased toward gly residues: residues 86 to 138 (GSGG…GGYG) and 145 to 157 (DGGYGGGGGGSRW).

Its function is as follows. May play a role in the biosynthesis and processing of heterogeneous nuclear RNA and in the maturation of specific mRNAs in response to wounding. In Daucus carota (Wild carrot), this protein is Glycine-rich RNA-binding protein.